The following is a 134-amino-acid chain: Viral interleukin-8 homolog (134 aa).

Positions 1 to 22 (MQALLLVLVLFIVQIYLLPGNG) are cleaved as a signal peptide.

This sequence belongs to the intercrine alpha (chemokine CxC) family. As to quaternary structure, homodimer.

It localises to the secreted. In terms of biological role, plays a role in the early phase of cytolytic infections presumably by recruiting host B or T-lymphocytes. In Gallus gallus (Chicken), this protein is Viral interleukin-8 homolog (MDV078).